Reading from the N-terminus, the 387-residue chain is Succinate--CoA ligase [ADP-forming] subunit beta (387 aa).

ATP contacts are provided by residues lysine 46, 53 to 55 (GRG), glutamate 99, alanine 102, and glutamate 107. Positions 199 and 213 each coordinate Mg(2+). Substrate is bound by residues asparagine 264 and 321–323 (GIV).

Belongs to the succinate/malate CoA ligase beta subunit family. As to quaternary structure, heterotetramer of two alpha and two beta subunits. Mg(2+) is required as a cofactor.

The enzyme catalyses succinate + ATP + CoA = succinyl-CoA + ADP + phosphate. It carries out the reaction GTP + succinate + CoA = succinyl-CoA + GDP + phosphate. It functions in the pathway carbohydrate metabolism; tricarboxylic acid cycle; succinate from succinyl-CoA (ligase route): step 1/1. Functionally, succinyl-CoA synthetase functions in the citric acid cycle (TCA), coupling the hydrolysis of succinyl-CoA to the synthesis of either ATP or GTP and thus represents the only step of substrate-level phosphorylation in the TCA. The beta subunit provides nucleotide specificity of the enzyme and binds the substrate succinate, while the binding sites for coenzyme A and phosphate are found in the alpha subunit. The chain is Succinate--CoA ligase [ADP-forming] subunit beta from Campylobacter jejuni (strain RM1221).